We begin with the raw amino-acid sequence, 196 residues long: ATP-dependent Clp protease proteolytic subunit (196 aa).

S98 (nucleophile) is an active-site residue. The active site involves H123.

This sequence belongs to the peptidase S14 family. In terms of assembly, fourteen ClpP subunits assemble into 2 heptameric rings which stack back to back to give a disk-like structure with a central cavity, resembling the structure of eukaryotic proteasomes.

The protein resides in the cytoplasm. It carries out the reaction Hydrolysis of proteins to small peptides in the presence of ATP and magnesium. alpha-casein is the usual test substrate. In the absence of ATP, only oligopeptides shorter than five residues are hydrolyzed (such as succinyl-Leu-Tyr-|-NHMec, and Leu-Tyr-Leu-|-Tyr-Trp, in which cleavage of the -Tyr-|-Leu- and -Tyr-|-Trp bonds also occurs).. In terms of biological role, cleaves peptides in various proteins in a process that requires ATP hydrolysis. Has a chymotrypsin-like activity. Plays a major role in the degradation of misfolded proteins. This is ATP-dependent Clp protease proteolytic subunit from Geobacillus sp. (strain WCH70).